Reading from the N-terminus, the 612-residue chain is Zinc metalloproteinase-disintegrin-like 2d (612 aa).

The N-terminal stretch at 1-20 (MIQVLLVTICLAVFPYQGSS) is a signal peptide. Residues 21 to 189 (IILGSGNVND…KKASQLNLTP (169 aa)) constitute a propeptide that is removed on maturation. The 197-residue stretch at 199–395 (KYIELVIVAD…NRPPCILNKP (197 aa)) folds into the Peptidase M12B domain. Glutamate 202 lines the Ca(2+) pocket. Asparagine 218 carries an N-linked (GlcNAc...) asparagine glycan. Aspartate 286 lines the Ca(2+) pocket. Intrachain disulfides connect cysteine 310-cysteine 390, cysteine 350-cysteine 374, and cysteine 352-cysteine 357. Zn(2+) is bound at residue histidine 335. Glutamate 336 is an active-site residue. Zn(2+)-binding residues include histidine 339 and histidine 345. Positions 390, 393, 405, 408, 410, 412, 415, and 418 each coordinate Ca(2+). The Disintegrin domain maps to 403–489 (PPVCGNYFVE…DCPTDNFQRN (87 aa)). 14 cysteine pairs are disulfide-bonded: cysteine 406/cysteine 435, cysteine 417/cysteine 430, cysteine 419/cysteine 425, cysteine 429/cysteine 452, cysteine 443/cysteine 449, cysteine 448/cysteine 474, cysteine 461/cysteine 481, cysteine 468/cysteine 500, cysteine 493/cysteine 505, cysteine 512/cysteine 562, cysteine 527/cysteine 573, cysteine 540/cysteine 550, cysteine 557/cysteine 599, and cysteine 593/cysteine 605. Positions 467–469 (ECD) match the D/ECD-tripeptide motif.

Belongs to the venom metalloproteinase (M12B) family. P-III subfamily. The cofactor is Zn(2+). Expressed by the venom gland.

It localises to the secreted. Functionally, snake venom metalloproteinase that impairs hemostasis in the envenomed animal. The polypeptide is Zinc metalloproteinase-disintegrin-like 2d (Crotalus adamanteus (Eastern diamondback rattlesnake)).